A 459-amino-acid polypeptide reads, in one-letter code: Protein ABHD15 (459 aa).

The signal sequence occupies residues 1 to 28 (MPPWAAALALLLAALALLLLRPWKRAVG). Active-site charge relay system residues include Asp-351 and His-382. Position 425 is a phosphoserine (Ser-425).

Belongs to the AB hydrolase superfamily. AB hydrolase 4 family. In terms of assembly, interacts with PDE3B; this interaction regulates PDE3B's stability and expression and, thereby, impacts the antilipolytic action of insulin. In terms of tissue distribution, mainly expressed in adipocytes and adipose depots, followed by a weak expression in liver and pancreas. In white adipose tissue (WAT), only expressed in mature adipocytes and primary adipocytes differentiated from stromal vascular cells (SVCs), but not in undifferentiated SVCs.

Its subcellular location is the secreted. May regulate adipocyte lipolysis and liver lipid accumulation. In Mus musculus (Mouse), this protein is Protein ABHD15.